Consider the following 390-residue polypeptide: Small ribosomal subunit protein uS9m (390 aa).

The segment at 368–390 (PRIRERKKPGQEGARRKFTWKKR) is disordered.

The protein belongs to the universal ribosomal protein uS9 family. Component of the mitochondrial ribosome small subunit (28S) which comprises a 12S rRNA and about 30 distinct proteins.

Its subcellular location is the mitochondrion. The protein is Small ribosomal subunit protein uS9m (Mrps9) of Mus musculus (Mouse).